The chain runs to 864 residues: Protein translocase subunit SecA (864 aa).

Residues glutamine 85, 103-107 (GEGKT), and aspartate 542 contribute to the ATP site.

The protein belongs to the SecA family. Monomer and homodimer. Part of the essential Sec protein translocation apparatus which comprises SecA, SecYEG and auxiliary proteins SecDF. Other proteins may also be involved.

It localises to the cell inner membrane. The protein localises to the cytoplasm. The catalysed reaction is ATP + H2O + cellular proteinSide 1 = ADP + phosphate + cellular proteinSide 2.. Functionally, part of the Sec protein translocase complex. Interacts with the SecYEG preprotein conducting channel. Has a central role in coupling the hydrolysis of ATP to the transfer of proteins into and across the cell membrane, serving as an ATP-driven molecular motor driving the stepwise translocation of polypeptide chains across the membrane. This is Protein translocase subunit SecA from Fervidobacterium nodosum (strain ATCC 35602 / DSM 5306 / Rt17-B1).